The primary structure comprises 285 residues: Small ribosomal subunit biogenesis GTPase RsgA (285 aa).

Residues 56 to 217 form the CP-type G domain; that stretch reads DNLLIRPIVA…IIDTPGFSSI (162 aa). GTP contacts are provided by residues 105–108 and 159–167; these read NKID and GPSGVGKSS. 4 residues coordinate Zn(2+): Cys-241, Cys-246, His-248, and Cys-254.

It belongs to the TRAFAC class YlqF/YawG GTPase family. RsgA subfamily. In terms of assembly, monomer. Associates with 30S ribosomal subunit, binds 16S rRNA. Zn(2+) is required as a cofactor.

It is found in the cytoplasm. Functionally, one of several proteins that assist in the late maturation steps of the functional core of the 30S ribosomal subunit. Helps release RbfA from mature subunits. May play a role in the assembly of ribosomal proteins into the subunit. Circularly permuted GTPase that catalyzes slow GTP hydrolysis, GTPase activity is stimulated by the 30S ribosomal subunit. The polypeptide is Small ribosomal subunit biogenesis GTPase RsgA (Fusobacterium nucleatum subsp. nucleatum (strain ATCC 25586 / DSM 15643 / BCRC 10681 / CIP 101130 / JCM 8532 / KCTC 2640 / LMG 13131 / VPI 4355)).